The primary structure comprises 442 residues: ATP-dependent RNA helicase SUB2 (442 aa).

Positions 59 to 87 (TGFRDFLLKGELLRAITDCGFEHPSEVQQ) match the Q motif motif. A Helicase ATP-binding domain is found at 90–265 (IPTAILNVDV…KKFMRNPLEV (176 aa)). 103–110 (AKSGLGKT) provides a ligand contact to ATP. The DECD box signature appears at 212 to 215 (DECD). A Helicase C-terminal domain is found at 293–438 (KLNELLDSLE…EYPQGGVDSS (146 aa)).

Belongs to the DEAD box helicase family. DECD subfamily.

The protein localises to the nucleus. The enzyme catalyses ATP + H2O = ADP + phosphate + H(+). In terms of biological role, ATP-binding RNA helicase involved in transcription elongation and required for the export of mRNA out of the nucleus. SUB2 also plays a role in pre-mRNA splicing and spliceosome assembly. May be involved in rDNA and telomeric silencing, and maintenance of genome integrity. The chain is ATP-dependent RNA helicase SUB2 (SUB2) from Ajellomyces capsulatus (strain NAm1 / WU24) (Darling's disease fungus).